A 473-amino-acid polypeptide reads, in one-letter code: Pup--protein ligase (473 aa).

Glu9 serves as a coordination point for Mg(2+). Residue Arg54 participates in ATP binding. Tyr56 serves as a coordination point for Mg(2+). Asp58 functions as the Proton acceptor in the catalytic mechanism. Position 64 (Glu64) interacts with Mg(2+). Positions 67 and 425 each coordinate ATP.

Belongs to the Pup ligase/Pup deamidase family. Pup-conjugating enzyme subfamily.

It catalyses the reaction ATP + [prokaryotic ubiquitin-like protein]-L-glutamate + [protein]-L-lysine = ADP + phosphate + N(6)-([prokaryotic ubiquitin-like protein]-gamma-L-glutamyl)-[protein]-L-lysine.. Its pathway is protein degradation; proteasomal Pup-dependent pathway. It participates in protein modification; protein pupylation. In terms of biological role, catalyzes the covalent attachment of the prokaryotic ubiquitin-like protein modifier Pup to the proteasomal substrate proteins, thereby targeting them for proteasomal degradation. This tagging system is termed pupylation. The ligation reaction involves the side-chain carboxylate of the C-terminal glutamate of Pup and the side-chain amino group of a substrate lysine. The protein is Pup--protein ligase of Brachybacterium faecium (strain ATCC 43885 / DSM 4810 / JCM 11609 / LMG 19847 / NBRC 14762 / NCIMB 9860 / 6-10).